A 691-amino-acid chain; its full sequence is Kinetochore protein NDC80 (691 aa).

Positions M1–S95 are disordered. The segment covering H10–R19 has biased composition (basic and acidic residues). A compositionally biased stretch (polar residues) spans F20–L42. A Phosphothreonine modification is found at T38. Low complexity predominate over residues T54–I65. A Phosphothreonine modification is found at T248. 2 coiled-coil regions span residues G376–S446 and K522–E686.

It belongs to the NDC80/HEC1 family. Component of the NDC80 complex, which consists of NDC80, NUF2, SPC24 and SPC25. The NDC80 complex is formed by two subcomplexes, NDC80-NUF2 and SPC24-SPC25, which are joined end-to-end through their coiled-coil domains. It has a rod-like structure with a length of 570 Angstroms and globular domains at either end. The NDC80-NUF2 globular domains are probably directed to microtubules, the SPC24-SPC25 globular domains to the centromere. NDC80 probably interacts with SMC1 and SMC2. Also interacts with KIN3. Interacts with DMC1.

It localises to the nucleus. The protein resides in the chromosome. It is found in the centromere. The protein localises to the kinetochore. Its function is as follows. Acts as a component of the essential kinetochore-associated NDC80 complex, which is involved in chromosome segregation and spindle checkpoint activity. This chain is Kinetochore protein NDC80, found in Saccharomyces cerevisiae (strain ATCC 204508 / S288c) (Baker's yeast).